Here is a 319-residue protein sequence, read N- to C-terminus: Pre T-cell antigen receptor alpha (319 aa).

A signal peptide spans 1–16 (MAESWLLLLLALGCPA). Topologically, residues 17–160 (LPTEVTTLLR…LRGTRALVLR (144 aa)) are extracellular. Cys-58 and Cys-118 form a disulfide bridge. Asn-78 carries N-linked (GlcNAc...) asparagine glycosylation. A helical transmembrane segment spans residues 161-181 (LGALRLLLFKLLLLDVLLTCG). The Cytoplasmic segment spans residues 182-319 (RLHAPPAARG…PPADPSFPGG (138 aa)). The span at 189 to 207 (ARGDPAGASGPGAPSLPAP) shows a compositional bias: low complexity. The segment at 189-293 (ARGDPAGASG…VLRAWSSGPS (105 aa)) is disordered. Positions 260 to 271 (RRRRVHTRRPRR) are enriched in basic residues.

Heterodimer with TCRB; disulfide linked. This heterodimer assembles with CD3 proteins into a signaling-competent pre-T-cell receptor complex. Interacts with RHBDD1.

Its subcellular location is the membrane. It is found in the cell membrane. Its function is as follows. Component of the pre-T-cell receptor complex (composed of PTCRA, TCRB and the CD3 complex) that has a crucial role in early T-cell development, particularly alpha-beta T cell differentiation. The sequence is that of Pre T-cell antigen receptor alpha (PTCRA) from Bos taurus (Bovine).